We begin with the raw amino-acid sequence, 193 residues long: Rho-related GTP-binding protein RhoA-A (193 aa).

GTP is bound by residues 12 to 19 (GDGACGKT), 30 to 37 (FPEVYVPT), 59 to 63 (DTAGQ), 117 to 120 (NKKD), and 160 to 162 (SAK). Tyr34 is a glycosylation site ((Microbial infection) O-linked (GlcNAc) tyrosine; by Yersinia Afp18). Cys190 carries the cysteine methyl ester modification. Residue Cys190 is the site of S-geranylgeranyl cysteine attachment. The propeptide at 191 to 193 (ALL) is removed in mature form.

Belongs to the small GTPase superfamily. Rho family. In terms of processing, (Microbial infection) Glycosylated at Tyr-34 by Yersinia ruckeri toxin Afp18. Mono-O-GlcNAcylation by Afp18 inhibits RhoA activation by guanine nucleotide exchange factors and blocks RhoA signaling.

Its subcellular location is the cell membrane. Its function is as follows. Regulates a signal transduction pathway linking plasma membrane receptors to the assembly of focal adhesions and actin stress fibers. This chain is Rho-related GTP-binding protein RhoA-A, found in Danio rerio (Zebrafish).